A 320-amino-acid chain; its full sequence is MTLTASPTAARTPAEEKARFEGNKLAKRLARETTRAIADYNMIEAGDKVMVCLSGGKDSYALLDILLSLQKRAPFAFEIIAVNLDQKQPGFPPEILPDYLRALGVPFHIETQDTYSIVTRVIPEGKTMCSLCSRLRRGILYRVASELGATKIALGHHRDDILGTFFLNLFYGGKAKGMPPKLVSDDGRHTVIRPLAYVPESDLIAYAQFKQFPIIPCNLCGSQENLKRKEVGRMIQEWDRKHPGRSWNVFNALSRVVPSHLMDRDLFDFVGLKPTGVADAGGDTAFDQIDPEPDTAGPGCASDAPAGQADGMAEQRVVFR.

Positions 54–59 match the PP-loop motif motif; sequence SGGKDS. [4Fe-4S] cluster-binding residues include Cys-129, Cys-132, and Cys-220.

Belongs to the TtcA family. As to quaternary structure, homodimer. Mg(2+) is required as a cofactor. It depends on [4Fe-4S] cluster as a cofactor.

It localises to the cytoplasm. The catalysed reaction is cytidine(32) in tRNA + S-sulfanyl-L-cysteinyl-[cysteine desulfurase] + AH2 + ATP = 2-thiocytidine(32) in tRNA + L-cysteinyl-[cysteine desulfurase] + A + AMP + diphosphate + H(+). The protein operates within tRNA modification. Its function is as follows. Catalyzes the ATP-dependent 2-thiolation of cytidine in position 32 of tRNA, to form 2-thiocytidine (s(2)C32). The sulfur atoms are provided by the cysteine/cysteine desulfurase (IscS) system. The sequence is that of tRNA-cytidine(32) 2-sulfurtransferase from Bordetella bronchiseptica (strain ATCC BAA-588 / NCTC 13252 / RB50) (Alcaligenes bronchisepticus).